The chain runs to 432 residues: Selenocysteine lyase (432 aa).

Met-1 is subject to N-acetylmethionine. Residues 1–20 (MDVARNGARGSVESPPNRKV) are disordered. At Ser-117 the chain carries Phosphoserine. Lys-247 bears the N6-(pyridoxal phosphate)lysine mark. Cys-375 functions as the S-selanylcysteine intermediate in the catalytic mechanism.

This sequence belongs to the class-V pyridoxal-phosphate-dependent aminotransferase family. Homodimer. Requires pyridoxal 5'-phosphate as cofactor.

It localises to the cytoplasm. The protein localises to the cytosol. It carries out the reaction L-selenocysteine + AH2 = hydrogenselenide + L-alanine + A + H(+). Its function is as follows. Catalyzes the decomposition of L-selenocysteine to L-alanine and elemental selenium. In Rattus norvegicus (Rat), this protein is Selenocysteine lyase (Scly).